The sequence spans 249 residues: Isoprenyl transferase 1 (249 aa).

Asp30 is a catalytic residue. Residue Asp30 coordinates Mg(2+). Substrate is bound by residues 31-34 (GNGR), Trp35, Arg43, His47, and 75-77 (STE). Asn78 serves as the catalytic Proton acceptor. Substrate-binding positions include Trp79, Arg81, Arg198, and 204-206 (RMS). Residue Glu217 coordinates Mg(2+).

It belongs to the UPP synthase family. Homodimer. It depends on Mg(2+) as a cofactor.

Its function is as follows. Catalyzes the condensation of isopentenyl diphosphate (IPP) with allylic pyrophosphates generating different type of terpenoids. In Tropheryma whipplei (strain Twist) (Whipple's bacillus), this protein is Isoprenyl transferase 1.